We begin with the raw amino-acid sequence, 381 residues long: Chaperone protein DnaJ (381 aa).

A J domain is found at 5–70 (DYYEVLGCDR…QKRGAYDRYG (66 aa)). The CR-type zinc-finger motif lies at 136 to 214 (GKTAQISIPT…CGGAGRVTRE (79 aa)). Cysteine 149, cysteine 152, cysteine 166, cysteine 169, cysteine 188, cysteine 191, cysteine 202, and cysteine 205 together coordinate Zn(2+). CXXCXGXG motif repeat units lie at residues 149 to 156 (CEVCSGSG), 166 to 173 (CRTCNGAG), 188 to 195 (CPSCQGRG), and 202 to 209 (CPNCGGAG).

This sequence belongs to the DnaJ family. Homodimer. It depends on Zn(2+) as a cofactor.

The protein resides in the cytoplasm. Participates actively in the response to hyperosmotic and heat shock by preventing the aggregation of stress-denatured proteins and by disaggregating proteins, also in an autonomous, DnaK-independent fashion. Unfolded proteins bind initially to DnaJ; upon interaction with the DnaJ-bound protein, DnaK hydrolyzes its bound ATP, resulting in the formation of a stable complex. GrpE releases ADP from DnaK; ATP binding to DnaK triggers the release of the substrate protein, thus completing the reaction cycle. Several rounds of ATP-dependent interactions between DnaJ, DnaK and GrpE are required for fully efficient folding. Also involved, together with DnaK and GrpE, in the DNA replication of plasmids through activation of initiation proteins. The protein is Chaperone protein DnaJ of Azorhizobium caulinodans (strain ATCC 43989 / DSM 5975 / JCM 20966 / LMG 6465 / NBRC 14845 / NCIMB 13405 / ORS 571).